Consider the following 196-residue polypeptide: Glycerol-3-phosphate acyltransferase (196 aa).

The next 4 helical transmembrane spans lie at 4-24 (IYIA…GLIL), 70-90 (VLIA…LGAF), 111-131 (IGVL…LWLA), and 152-172 (IFLW…LTLL).

Belongs to the PlsY family. In terms of assembly, probably interacts with PlsX.

The protein resides in the cell inner membrane. It catalyses the reaction an acyl phosphate + sn-glycerol 3-phosphate = a 1-acyl-sn-glycero-3-phosphate + phosphate. It functions in the pathway lipid metabolism; phospholipid metabolism. Catalyzes the transfer of an acyl group from acyl-phosphate (acyl-PO(4)) to glycerol-3-phosphate (G3P) to form lysophosphatidic acid (LPA). This enzyme utilizes acyl-phosphate as fatty acyl donor, but not acyl-CoA or acyl-ACP. In Rhodopseudomonas palustris (strain BisB5), this protein is Glycerol-3-phosphate acyltransferase.